Here is a 308-residue protein sequence, read N- to C-terminus: D-alanine--D-alanine ligase B (308 aa).

The region spanning 102 to 302 (KKVAAAAGVV…FAELLSWMVE (201 aa)) is the ATP-grasp domain. Residue 128 to 183 (PMKPPYVVKPVREGSSFGVVIVKEDQPHPPQVIGSADWKYGDEVMVEGYIAGRELT) participates in ATP binding. Mg(2+) contacts are provided by aspartate 252, glutamate 269, and asparagine 271.

It belongs to the D-alanine--D-alanine ligase family. It depends on Mg(2+) as a cofactor. The cofactor is Mn(2+).

The protein localises to the cytoplasm. It catalyses the reaction 2 D-alanine + ATP = D-alanyl-D-alanine + ADP + phosphate + H(+). Its pathway is cell wall biogenesis; peptidoglycan biosynthesis. Cell wall formation. The protein is D-alanine--D-alanine ligase B of Brucella suis biovar 1 (strain 1330).